Reading from the N-terminus, the 336-residue chain is Glyceraldehyde-3-phosphate dehydrogenase (336 aa).

Residues 12–13 (RI), aspartate 34, and arginine 79 each bind NAD(+). D-glyceraldehyde 3-phosphate-binding positions include 150–152 (SCT), threonine 181, 210–211 (TG), and arginine 233. The active-site Nucleophile is cysteine 151. Asparagine 315 contributes to the NAD(+) binding site.

It belongs to the glyceraldehyde-3-phosphate dehydrogenase family. In terms of assembly, homotetramer.

It is found in the cytoplasm. It carries out the reaction D-glyceraldehyde 3-phosphate + phosphate + NAD(+) = (2R)-3-phospho-glyceroyl phosphate + NADH + H(+). The protein operates within carbohydrate degradation; glycolysis; pyruvate from D-glyceraldehyde 3-phosphate: step 1/5. Functionally, involved in osmoadaptation. This chain is Glyceraldehyde-3-phosphate dehydrogenase (gpdA), found in Emericella nidulans (strain FGSC A4 / ATCC 38163 / CBS 112.46 / NRRL 194 / M139) (Aspergillus nidulans).